Reading from the N-terminus, the 383-residue chain is Ceramide synthase 3 (383 aa).

The chain crosses the membrane as a helical span at residues 32 to 52 (VFVKASHLYITIPYAFLLMVV). Positions 66–127 (NALGIKKTQH…RIRQKQNKPC (62 aa)) are homeobox-like. Residues 130–331 (QKFQESCWRF…ILKMLNRCIF (202 aa)) form the TLC domain. 5 helical membrane-spanning segments follow: residues 139 to 159 (FTFYLLITMAGAVFLYDKPWA), 174 to 194 (LLPSQYWYYILEMSFYWSLVF), 205 to 225 (FLAHVIHHLAAISLMSFSWCA), 263 to 283 (LFFIFTVVFFISRFIIFPFWI), and 302 to 322 (IFLNLQLMILQGLHVYWGYFI). Residues 323–383 (LKMLNRCIFT…HLIANGQHGR (61 aa)) are Cytoplasmic-facing. Residue S340 is modified to Phosphoserine. The disordered stretch occupies residues 340–383 (SDNEEEEEEEEEEEAESTKGKETEYLKNGLGTNRHLIANGQHGR). The span at 342 to 354 (NEEEEEEEEEEEA) shows a compositional bias: acidic residues. Basic and acidic residues predominate over residues 355-364 (ESTKGKETEY).

As to expression, predominantly expressed in testis. In skin, present in the upper stratum spinosum and stratum granulosum (at protein level).

It localises to the endoplasmic reticulum membrane. The catalysed reaction is a very long-chain fatty acyl-CoA + a sphingoid base = an N-(very-long-chain fatty acyl)-sphingoid base + CoA + H(+). It carries out the reaction docosanoyl-CoA + sphinganine = N-docosanoylsphinganine + CoA + H(+). The enzyme catalyses tetracosanoyl-CoA + sphinganine = N-tetracosanoylsphinganine + CoA + H(+). It catalyses the reaction hexacosanoyl-CoA + sphinganine = N-hexacosanoylsphinganine + CoA + H(+). The catalysed reaction is 2-hydroxydocosanoyl-CoA + sphinganine = N-(2-hydroxydocosanoyl)-sphinganine + CoA + H(+). It carries out the reaction 2-hydroxytetracosanoyl-CoA + sphinganine = N-(2-hydroxytetracosanoyl)-sphinganine + CoA + H(+). The enzyme catalyses an ultra-long-chain fatty acyl-CoA + a sphingoid base = an N-(ultra-long-chain-acyl)-sphingoid base + CoA + H(+). It catalyses the reaction octacosanoyl-CoA + sphinganine = N-(octacosanoyl)-sphinganine + CoA + H(+). The catalysed reaction is a fatty acyl-CoA + sphing-4-enine = an N-acylsphing-4-enine + CoA + H(+). It carries out the reaction sphinganine + octadecanoyl-CoA = N-(octadecanoyl)-sphinganine + CoA + H(+). The enzyme catalyses 2-hydroxyoctadecanoyl-CoA + sphinganine = N-(2-hydroxyoctadecanoyl)-sphinganine + CoA + H(+). It participates in lipid metabolism; sphingolipid metabolism. Functionally, ceramide synthase that catalyzes the transfer of the acyl chain from acyl-CoA to a sphingoid base, with high selectivity toward very- and ultra-long-chain fatty acyl-CoA (chain length greater than C22). N-acylates sphinganine and sphingosine bases to form dihydroceramides and ceramides in de novo synthesis and salvage pathways, respectively. It is crucial for the synthesis of ultra-long-chain ceramides in the epidermis, to maintain epidermal lipid homeostasis and terminal differentiation. The polypeptide is Ceramide synthase 3 (Mus musculus (Mouse)).